The sequence spans 434 residues: Chaperone SurA (434 aa).

A signal peptide spans 1-22; sequence MKPSKHLIFALFALAISQPTMA. PpiC domains are found at residues 173 to 274 and 283 to 383; these read DVEY…KIMD and IEEV…QLEE.

The protein resides in the periplasm. The catalysed reaction is [protein]-peptidylproline (omega=180) = [protein]-peptidylproline (omega=0). Functionally, chaperone involved in the correct folding and assembly of outer membrane proteins. Recognizes specific patterns of aromatic residues and the orientation of their side chains, which are found more frequently in integral outer membrane proteins. May act in both early periplasmic and late outer membrane-associated steps of protein maturation. In Shewanella sp. (strain MR-7), this protein is Chaperone SurA.